The primary structure comprises 210 residues: Cell wall protein SRL1 (210 aa).

Positions 1–19 (MLQSVVFFALLTFASSVSA) are cleaved as a signal peptide. The N-linked (GlcNAc...) asparagine glycan is linked to Asn23. 2 disordered regions span residues 80–99 (SLST…HEIT) and 118–142 (LSPS…VKSF). Positions 118 to 127 (LSPSSTAASV) are enriched in low complexity. Positions 132–141 (SNNKDAKVKS) are enriched in basic and acidic residues. Asn174, Asn200, and Asn206 each carry an N-linked (GlcNAc...) asparagine glycan.

The protein resides in the secreted. The protein localises to the cell wall. Its subcellular location is the cell surface. Its function is as follows. Required to stabilize the cell wall in the absence of multiple GPI-anchored mannoproteins. This Saccharomyces cerevisiae (strain ATCC 204508 / S288c) (Baker's yeast) protein is Cell wall protein SRL1 (SRL1).